Reading from the N-terminus, the 55-residue chain is uncharacterized protein (55 aa).

This is an uncharacterized protein from Escherichia coli (Bacteriophage T4).